A 354-amino-acid polypeptide reads, in one-letter code: Guanine nucleotide-binding protein G(i) subunit alpha (354 aa).

Gly2 is lipidated: N-myristoyl glycine. The S-palmitoyl cysteine moiety is linked to residue Cys3. The G-alpha domain maps to 32–354 (REVKLLLLGA…KNNLKDCGLF (323 aa)). A G1 motif region spans residues 35–48 (KLLLLGAGESGKST). Residues 40–47 (GAGESGKS), 175–181 (LRTRVKT), 200–204 (DVGGQ), 269–272 (NKKD), and Ala326 contribute to the GTP site. Ser47 and Thr181 together coordinate Mg(2+). The interval 173–181 (DVLRTRVKT) is G2 motif. Residues 196-205 (FKMFDVGGQR) form a G3 motif region. A G4 motif region spans residues 265-272 (ILFLNKKD). Residues 324-329 (TCATDT) form a G5 motif region.

It belongs to the G-alpha family. G(i/o/t/z) subfamily. In terms of assembly, g proteins are composed of 3 units; alpha, beta and gamma. The alpha chain contains the guanine nucleotide binding site.

Guanine nucleotide-binding proteins (G proteins) are involved as modulators or transducers in various transmembrane signaling systems. The G(i) proteins are involved in hormonal regulation of adenylate cyclase: they inhibit the cyclase in response to beta-adrenergic stimuli. The sequence is that of Guanine nucleotide-binding protein G(i) subunit alpha from Lymnaea stagnalis (Great pond snail).